A 209-amino-acid polypeptide reads, in one-letter code: Small ribosomal subunit protein uS3 (209 aa).

The KH type-2 domain maps to 38–107 (IRKVIKSKYA…RFIVNVEEIK (70 aa)).

This sequence belongs to the universal ribosomal protein uS3 family. As to quaternary structure, part of the 30S ribosomal subunit. Forms a tight complex with proteins S10 and S14.

Its function is as follows. Binds the lower part of the 30S subunit head. Binds mRNA in the 70S ribosome, positioning it for translation. This chain is Small ribosomal subunit protein uS3, found in Thermosipho melanesiensis (strain DSM 12029 / CIP 104789 / BI429).